A 403-amino-acid polypeptide reads, in one-letter code: ESX-5 secretion system protein EccE5 (403 aa).

2 helical membrane passes run 9-29 (LALS…ILIV) and 43-63 (IAWW…VVTY).

The protein belongs to the EccE family. Part of the ESX-5 / type VII secretion system (T7SS), which is composed of cytosolic and membrane components. The ESX-5 membrane complex is composed of EccB5, EccC5, EccD5 and EccE5.

It is found in the cell inner membrane. Part of the ESX-5 specialized secretion system, which is responsible for the secretion of EsxN and a number of PE_PGRS and PPE proteins. In Mycobacterium marinum (strain ATCC BAA-535 / M), this protein is ESX-5 secretion system protein EccE5.